Reading from the N-terminus, the 473-residue chain is Photosystem II CP43 reaction center protein (473 aa).

Residues 1 to 14 (MKTLYSLRRFYHVE) constitute a propeptide that is removed on maturation. T15 bears the N-acetylthreonine mark. T15 carries the phosphothreonine modification. 5 helical membrane-spanning segments follow: residues 69-93 (LFEV…PHLA), 134-155 (LLGP…KDRN), 178-200 (KAFY…RKIT), 255-275 (KPFA…LSYS), and 291-312 (WFNN…ASQA). E367 provides a ligand contact to [CaMn4O5] cluster. The helical transmembrane segment at 447–471 (RARAAAAGFEKGIDRDFEPVLSMTP) threads the bilayer.

This sequence belongs to the PsbB/PsbC family. PsbC subfamily. PSII is composed of 1 copy each of membrane proteins PsbA, PsbB, PsbC, PsbD, PsbE, PsbF, PsbH, PsbI, PsbJ, PsbK, PsbL, PsbM, PsbT, PsbX, PsbY, PsbZ, Psb30/Ycf12, at least 3 peripheral proteins of the oxygen-evolving complex and a large number of cofactors. It forms dimeric complexes. Binds multiple chlorophylls and provides some of the ligands for the Ca-4Mn-5O cluster of the oxygen-evolving complex. It may also provide a ligand for a Cl- that is required for oxygen evolution. PSII binds additional chlorophylls, carotenoids and specific lipids. serves as cofactor.

It is found in the plastid. The protein resides in the chloroplast thylakoid membrane. Its function is as follows. One of the components of the core complex of photosystem II (PSII). It binds chlorophyll and helps catalyze the primary light-induced photochemical processes of PSII. PSII is a light-driven water:plastoquinone oxidoreductase, using light energy to abstract electrons from H(2)O, generating O(2) and a proton gradient subsequently used for ATP formation. This chain is Photosystem II CP43 reaction center protein, found in Pisum sativum (Garden pea).